The following is a 573-amino-acid chain: WRKY transcription factor SUSIBA2 (573 aa).

Disordered stretches follow at residues 56 to 133 and 157 to 192; these read AHPD…CSRE and PAEVGTSEPQQMNSSDNAMQEPQSENVADKSADDGY. Residues 64 to 85 show a composition bias toward basic and acidic residues; the sequence is PRDKSVRNAHEDRGSRDFEFKP. The segment covering 108–122 has biased composition (low complexity); sequence MQNQSMNPSSSSSNM. A compositionally biased stretch (polar residues) spans 163-182; sequence SEPQQMNSSDNAMQEPQSEN. A compositionally biased stretch (basic and acidic residues) spans 183–192; the sequence is VADKSADDGY. Positions 183–247 form a DNA-binding region, WRKY 1; it reads VADKSADDGY…YKGRHNHPKP (65 aa). Residues cysteine 214, cysteine 219, histidine 242, and histidine 244 each contribute to the Zn(2+) site. Positions 240-332 are disordered; it reads GRHNHPKPQP…EDLESKRRKM (93 aa). A compositionally biased stretch (basic and acidic residues) spans 263-277; it reads GEERYDGASAADDKS. Residues 357 to 422 constitute a DNA-binding region (WRKY 2); sequence SEVDILDDGY…YEGKHNHEVP (66 aa). Zn(2+)-binding residues include cysteine 388, cysteine 393, histidine 417, and histidine 419.

Belongs to the WRKY group I family. As to expression, expressed in endosperm, but not in leaves.

Its subcellular location is the nucleus. Its function is as follows. Transcription factor involved in starch synthesis. Acts as a transcriptional activator in sugar signaling. Interacts specifically with the SURE and W-box elements, but not with the SP8a element. In Hordeum vulgare (Barley), this protein is WRKY transcription factor SUSIBA2.